We begin with the raw amino-acid sequence, 192 residues long: MISEVVVTTRKNNRDNKAPIGVYFKDKKVIMHLFSGSHTYENLLTEDYFSVNVVPPIEIAKAVLDDEDDYLYYNDIPYLKSSYYAIFYKVIERKFVDREDKFGKNRLMILEGEEIKRIYLNNIPKPYNRADGLLVEIAVIYSRLANKNIKINEDDKKEMINDIRKYFSIIKKVGGREHKQLAEIMLRNLNLL.

The protein to M.thermoautotrophicum MTH863.

This is an uncharacterized protein from Methanocaldococcus jannaschii (strain ATCC 43067 / DSM 2661 / JAL-1 / JCM 10045 / NBRC 100440) (Methanococcus jannaschii).